We begin with the raw amino-acid sequence, 106 residues long: CRISPR-associated endoribonuclease Cas2 (106 aa).

Aspartate 8 is a binding site for Mg(2+). The disordered stretch occupies residues 86–106 (EEAAEAAVSYPGRSRKKARAG).

It belongs to the CRISPR-associated endoribonuclease Cas2 protein family. As to quaternary structure, homodimer, forms a heterotetramer with a Cas1 homodimer. The cofactor is Mg(2+).

In terms of biological role, CRISPR (clustered regularly interspaced short palindromic repeat), is an adaptive immune system that provides protection against mobile genetic elements (viruses, transposable elements and conjugative plasmids). CRISPR clusters contain sequences complementary to antecedent mobile elements and target invading nucleic acids. CRISPR clusters are transcribed and processed into CRISPR RNA (crRNA). Functions as a ssRNA-specific endoribonuclease. Involved in the integration of spacer DNA into the CRISPR cassette. The protein is CRISPR-associated endoribonuclease Cas2 of Desulforudis audaxviator (strain MP104C).